Consider the following 283-residue polypeptide: MSPPVYSDISRNINDLLNKDFYHATPAAFDVQTTTANGIKFSLKAKQPVKDGPLSTNVEAKLNDKQTGLGLTQGWSNTNNLQTKLEFANLTPGLKNELITSLTPGVAKSAVLNTTFTQPFFTARGAFDLCLKSPTFVGDLTMAHEGIVGGAEFGYDISAGSISRYAMALSYFAKDYSLGATLNNEQITTVDFFQNVNAFLQVGAKATMNCKLPNSNVNIEFATRYLPDASSQVKAKVSDSGIVTLAYKQLLRPGVTLGVGSSFDALKLSEPVHKLGWSLSFDA.

ATP-binding residues include R11 and K19. S109 carries the post-translational modification Phosphoserine. T117 is modified (phosphothreonine).

It belongs to the eukaryotic mitochondrial porin family. In terms of assembly, homodimer. Interacts with FCJ1. Interacts with AIM5. Interacts.

Its subcellular location is the mitochondrion outer membrane. Its function is as follows. Non-selective voltage-gated ion channel that mediates the transport of anions and cations through the mitochondrion outer membrane. The channel adopts an open conformation at low or zero membrane potential and a closed conformation at potentials above 30-40 mV. The open state has a weak anion selectivity whereas the closed state is cation-selective. Is the major permeability factor of the mitochondrial outer membrane. In terms of biological role, catalyzes the scrambling of phospholipids across the outer mitochondrial membrane; the mechanism is unrelated to channel activity and is capable of translocating both anionic and zwitterionic phospholipids. The sequence is that of Non-selective voltage-gated ion channel 1 (POR1) from Saccharomyces cerevisiae (strain ATCC 204508 / S288c) (Baker's yeast).